Reading from the N-terminus, the 683-residue chain is Long-chain fatty acid transport protein 3 (683 aa).

The chain crosses the membrane as a helical span at residues 3–23 (ALLLLPLLLLLPLLLLKLHLW). The span at 119–128 (GGDSGEGSAG) shows a compositional bias: gly residues. Residues 119 to 145 (GGDSGEGSAGEGERAAPGAGDAAAGSG) form a disordered region. A compositionally biased stretch (low complexity) spans 133-145 (AAPGAGDAAAGSG). Residues 288–292 (TSGTT), His331, Thr428, Asp528, Arg543, and Lys635 each bind ATP.

It belongs to the ATP-dependent AMP-binding enzyme family. In terms of tissue distribution, expressed in bronchial and bronchiolar epithelial cells (at protein level).

Its subcellular location is the mitochondrion membrane. It carries out the reaction a fatty acid(in) = a fatty acid(out). It catalyses the reaction a long-chain fatty acid + ATP + CoA = a long-chain fatty acyl-CoA + AMP + diphosphate. The enzyme catalyses hexadecanoate + ATP + CoA = hexadecanoyl-CoA + AMP + diphosphate. The catalysed reaction is (9Z)-octadecenoate + ATP + CoA = (9Z)-octadecenoyl-CoA + AMP + diphosphate. It carries out the reaction (9Z,12Z)-octadecadienoate + ATP + CoA = (9Z,12Z)-octadecadienoyl-CoA + AMP + diphosphate. It catalyses the reaction (5Z,8Z,11Z,14Z)-eicosatetraenoate + ATP + CoA = (5Z,8Z,11Z,14Z)-eicosatetraenoyl-CoA + AMP + diphosphate. The enzyme catalyses a very long-chain fatty acid + ATP + CoA = a very long-chain fatty acyl-CoA + AMP + diphosphate. The catalysed reaction is tetracosanoate + ATP + CoA = tetracosanoyl-CoA + AMP + diphosphate. Mainly functions as an acyl-CoA ligase catalyzing the ATP-dependent formation of fatty acyl-CoA using LCFA and very-long-chain fatty acids (VLCFA) as substrates. Can mediate the levels of long-chain fatty acids (LCFA) in the cell by facilitating their transport across membranes. This is Long-chain fatty acid transport protein 3 from Homo sapiens (Human).